We begin with the raw amino-acid sequence, 230 residues long: Nicotinamide riboside kinase (230 aa).

12-20 (GASCSGKST) is an ATP binding site. Mg(2+)-binding residues include Ser-19 and Asp-38. The Proton acceptor role is filled by Asp-38. Residues 38-41 (DDFY) and 56-57 (WD) contribute to the substrate site. Arg-153 serves as a coordination point for ATP. Residues Arg-154 and 159-160 (GY) each bind substrate. ATP contacts are provided by residues 157 to 159 (RTG) and 203 to 205 (RIQ).

This sequence belongs to the uridine kinase family. NRK subfamily.

It catalyses the reaction beta-nicotinamide D-riboside + ATP = beta-nicotinamide D-ribonucleotide + ADP + H(+). It carries out the reaction beta-D-ribosylnicotinate + ATP = nicotinate beta-D-ribonucleotide + ADP + H(+). Its pathway is cofactor biosynthesis; NAD(+) biosynthesis. Functionally, catalyzes the phosphorylation of nicotinamide riboside (NR) and nicotinic acid riboside (NaR) to form nicotinamide mononucleotide (NMN) and nicotinic acid mononucleotide (NaMN). The sequence is that of Nicotinamide riboside kinase (nrk1) from Schizosaccharomyces pombe (strain 972 / ATCC 24843) (Fission yeast).